We begin with the raw amino-acid sequence, 748 residues long: Catalase-peroxidase (748 aa).

Over residues 1–16 (MSSDTSASRPPQPDTR) the composition is skewed to polar residues. The segment at 1–43 (MSSDTSASRPPQPDTRTASKSESENPAIPSPHPKSNAPLTNRD) is disordered. The segment at residues 113–238 (WHAAGTYRIH…YGATTMGLIY (126 aa)) is a cross-link (tryptophyl-tyrosyl-methioninium (Trp-Tyr) (with M-264)). The active-site Proton acceptor is the His114. Positions 238–264 (YVNPEGPEGKPDPIAAAIDIRETFGRM) form a cross-link, tryptophyl-tyrosyl-methioninium (Tyr-Met) (with W-113). His279 serves as a coordination point for heme b.

It belongs to the peroxidase family. Peroxidase/catalase subfamily. In terms of assembly, homodimer or homotetramer. The cofactor is heme b. Post-translationally, formation of the three residue Trp-Tyr-Met cross-link is important for the catalase, but not the peroxidase activity of the enzyme.

It carries out the reaction H2O2 + AH2 = A + 2 H2O. The catalysed reaction is 2 H2O2 = O2 + 2 H2O. In terms of biological role, bifunctional enzyme with both catalase and broad-spectrum peroxidase activity. The sequence is that of Catalase-peroxidase from Mycolicibacterium paratuberculosis (strain ATCC BAA-968 / K-10) (Mycobacterium paratuberculosis).